The chain runs to 252 residues: MLTKRIIPCLDVKDGRVVKGVQFVDLRDAGDPVELAAFYDEQGADELVFLDISASHEGRETMIDVVEKVAGTLAIPFTVGGGINSLEDMKRVLRAGADKVSLNTAAVTRPELITEGADYFGSQCIVVAIDAKYDEALGSWRIYTHGGRTPTEWEVCDWAREAVRRGAGEILLTSMDQDGAKTGFDLALTTKVSEAVSVPVIASGGAGAKEDFVDVFMNAYADAALAASIFHYKETSVAEVKTHLREEGVAVR.

Residues D11 and D130 contribute to the active site.

It belongs to the HisA/HisF family. Heterodimer of HisH and HisF.

The protein localises to the cytoplasm. It catalyses the reaction 5-[(5-phospho-1-deoxy-D-ribulos-1-ylimino)methylamino]-1-(5-phospho-beta-D-ribosyl)imidazole-4-carboxamide + L-glutamine = D-erythro-1-(imidazol-4-yl)glycerol 3-phosphate + 5-amino-1-(5-phospho-beta-D-ribosyl)imidazole-4-carboxamide + L-glutamate + H(+). Its pathway is amino-acid biosynthesis; L-histidine biosynthesis; L-histidine from 5-phospho-alpha-D-ribose 1-diphosphate: step 5/9. Functionally, IGPS catalyzes the conversion of PRFAR and glutamine to IGP, AICAR and glutamate. The HisF subunit catalyzes the cyclization activity that produces IGP and AICAR from PRFAR using the ammonia provided by the HisH subunit. The chain is Imidazole glycerol phosphate synthase subunit HisF (hisF) from Halalkalibacterium halodurans (strain ATCC BAA-125 / DSM 18197 / FERM 7344 / JCM 9153 / C-125) (Bacillus halodurans).